A 254-amino-acid chain; its full sequence is 3-deoxy-manno-octulosonate cytidylyltransferase (254 aa).

Belongs to the KdsB family.

The protein localises to the cytoplasm. The enzyme catalyses 3-deoxy-alpha-D-manno-oct-2-ulosonate + CTP = CMP-3-deoxy-beta-D-manno-octulosonate + diphosphate. Its pathway is nucleotide-sugar biosynthesis; CMP-3-deoxy-D-manno-octulosonate biosynthesis; CMP-3-deoxy-D-manno-octulosonate from 3-deoxy-D-manno-octulosonate and CTP: step 1/1. The protein operates within bacterial outer membrane biogenesis; lipopolysaccharide biosynthesis. Functionally, activates KDO (a required 8-carbon sugar) for incorporation into bacterial lipopolysaccharide in Gram-negative bacteria. This chain is 3-deoxy-manno-octulosonate cytidylyltransferase, found in Chlamydia trachomatis serovar A (strain ATCC VR-571B / DSM 19440 / HAR-13).